A 643-amino-acid polypeptide reads, in one-letter code: Probable extracellular metalloproteinase 4 (643 aa).

A signal peptide spans 1 to 18 (MHGLLLAGLLALPLNVFA). Positions 19 to 254 (HPTESHSSGV…VHSVVDYVSA (236 aa)) are excised as a propeptide. Residues 49-69 (SDAVPKQDGESFTTSSTGDDN) form a disordered region. Residues 58 to 69 (ESFTTSSTGDDN) show a composition bias toward polar residues. N-linked (GlcNAc...) asparagine glycans are attached at residues asparagine 271 and asparagine 420. Position 437 (histidine 437) interacts with Zn(2+). Glutamate 438 is an active-site residue. Residue histidine 441 participates in Zn(2+) binding. N-linked (GlcNAc...) asparagine glycans are attached at residues asparagine 603 and asparagine 629.

Belongs to the peptidase M36 family. The cofactor is Zn(2+).

The protein resides in the secreted. Functionally, secreted metalloproteinase probably acting as a virulence factor. This chain is Probable extracellular metalloproteinase 4 (MEP4), found in Trichophyton verrucosum (strain HKI 0517).